The chain runs to 380 residues: Guanine nucleotide-binding protein subunit beta (380 aa).

7 WD repeats span residues 64-94, 106-136, 155-186, 203-234, 247-277, 296-326, and 342-372; these read GHSG…IVWN, LHCP…SIFN, GHKG…VLWD, GHTA…RLWD, GHED…RLFD, NELP…YVWD, and SHDG…KIWA.

This sequence belongs to the WD repeat G protein beta family. G proteins are composed of 3 units, alpha, beta and gamma. Present in the root, leaf and tassel.

Guanine nucleotide-binding proteins (G proteins) are involved as a modulator or transducer in various transmembrane signaling systems. The beta and gamma chains are required for the GTPase activity, for replacement of GDP by GTP, and for G protein-effector interaction. This Zea mays (Maize) protein is Guanine nucleotide-binding protein subunit beta (GB1).